A 448-amino-acid chain; its full sequence is MILGTPKADWLAEFPRLADLIALRPSEWFNPAIAPSAEALADVGLGAADVADASARLQRFAPLIARLFPETAASGGIIESDLVEVATFHDALRQHYAAELPGRLWLKRDSHLPISGSIKARGGIYEVLAHAERLALEHGLVGLDDDYSRLAEADCRAFFARHRIAVGSTGNLGLSIGIIGAALGFQASVHMSADARQWKKDKLRAHGVTVVEYASDYSVAVEQGRREAAGDPYTHFVDDENSRDLFLGYAVAAERLRGQLDAAGIRVDSEHPLFVHLPCGVGGGPGGVAFGLKLAFGDAVHCLFAEPTHSPCMFLGVYTGRHEQVSVQDFGIDNRTAADGLAVGRPSGFVGRAMQRLLDGYYTVDDDELFRLLALLERSQGIRLEPSALAGATGIARVTREPQGYRERMGLTSARLANATHLVWATGGGMVPETEMRAYLERGRSLLD.

K119 carries the post-translational modification N6-(pyridoxal phosphate)lysine.

Belongs to the serine/threonine dehydratase family. DsdA subfamily. It depends on pyridoxal 5'-phosphate as a cofactor.

The enzyme catalyses D-serine = pyruvate + NH4(+). This chain is Probable D-serine dehydratase, found in Pseudomonas aeruginosa (strain ATCC 15692 / DSM 22644 / CIP 104116 / JCM 14847 / LMG 12228 / 1C / PRS 101 / PAO1).